The primary structure comprises 258 residues: Hydroxyacylglutathione hydrolase (258 aa).

Zn(2+) contacts are provided by His-56, His-58, Asp-60, His-61, His-112, Asp-132, and His-170.

This sequence belongs to the metallo-beta-lactamase superfamily. Glyoxalase II family. As to quaternary structure, monomer. Zn(2+) serves as cofactor.

It catalyses the reaction an S-(2-hydroxyacyl)glutathione + H2O = a 2-hydroxy carboxylate + glutathione + H(+). The protein operates within secondary metabolite metabolism; methylglyoxal degradation; (R)-lactate from methylglyoxal: step 2/2. Functionally, thiolesterase that catalyzes the hydrolysis of S-D-lactoyl-glutathione to form glutathione and D-lactic acid. In Pseudomonas aeruginosa (strain ATCC 15692 / DSM 22644 / CIP 104116 / JCM 14847 / LMG 12228 / 1C / PRS 101 / PAO1), this protein is Hydroxyacylglutathione hydrolase.